The sequence spans 218 residues: Large ribosomal subunit protein uL3 (218 aa).

The disordered stretch occupies residues 121–163 (GYQKRHGFSRGPMTHGSKNHREPGSIGPGTTPGRIYPGKRMAG).

Belongs to the universal ribosomal protein uL3 family. Part of the 50S ribosomal subunit. Forms a cluster with proteins L14 and L19.

In terms of biological role, one of the primary rRNA binding proteins, it binds directly near the 3'-end of the 23S rRNA, where it nucleates assembly of the 50S subunit. This Parasynechococcus marenigrum (strain WH8102) protein is Large ribosomal subunit protein uL3.